The following is a 601-amino-acid chain: Deuterosome assembly protein 1 (601 aa).

3 coiled-coil regions span residues 14-59 (CEAE…NAQT), 86-197 (TQNY…KQQR), and 226-278 (IEKL…LQSR). Disordered regions lie at residues 115-135 (MKQN…PFEL) and 188-213 (QTQL…CESS). Residues 121 to 131 (HRKEASNKDET) show a composition bias toward basic and acidic residues. The tract at residues 307 to 326 (DNRKRVESSYSPSTKEPERK) is disordered. A coiled-coil region spans residues 340 to 397 (HEKELNKMRSQLYQEEDLCSEQERMRNEISELTQELHQKEVTIATIMKKAALLERQLK). The residue at position 544 (Ser544) is a Phosphoserine. The stretch at 555-586 (AAQHFLMEEEKRAKELEKLLNTHIDELQRHTE) forms a coiled coil.

It belongs to the CEP63 family. Interacts with CEP152; the interaction is mutually exclusive with CEP63.

It is found in the cytoplasm. Functionally, key structural component of the deuterosome, a structure that promotes de novo centriole amplification in multiciliated cells. Deuterosome-mediated centriole amplification occurs in terminally differentiated multiciliated cells and can generate more than 100 centrioles. Probably sufficient for the specification and formation of the deuterosome inner core. Interacts with CEP152 and recruits PLK4 to activate centriole biogenesis. This Rattus norvegicus (Rat) protein is Deuterosome assembly protein 1.